The sequence spans 131 residues: Modulator protein MzrA (131 aa).

At 1 to 14 the chain is on the cytoplasmic side; that stretch reads MSIRWLFPKLTPRK. Residues 15–31 form a helical membrane-spanning segment; the sequence is VARILILLALPIIALTQ. Residues 32 to 131 lie on the Periplasmic side of the membrane; the sequence is SQSLRHSQDD…KLTQKQSKLG (100 aa).

It belongs to the MzrA family. In terms of assembly, interacts with EnvZ.

Its subcellular location is the cell inner membrane. In terms of biological role, modulates the activity of the EnvZ/OmpR two-component regulatory system, probably by directly modulating EnvZ enzymatic activity and increasing stability of phosphorylated OmpR. In Pectobacterium carotovorum subsp. carotovorum (strain PC1), this protein is Modulator protein MzrA.